A 145-amino-acid chain; its full sequence is Large ribosomal subunit protein uL11 (145 aa).

It belongs to the universal ribosomal protein uL11 family. In terms of assembly, part of the ribosomal stalk of the 50S ribosomal subunit. Interacts with L10 and the large rRNA to form the base of the stalk. L10 forms an elongated spine to which L12 dimers bind in a sequential fashion forming a multimeric L10(L12)X complex. In terms of processing, one or more lysine residues are methylated.

Forms part of the ribosomal stalk which helps the ribosome interact with GTP-bound translation factors. The sequence is that of Large ribosomal subunit protein uL11 from Rickettsia prowazekii (strain Madrid E).